A 362-amino-acid polypeptide reads, in one-letter code: Methionine import ATP-binding protein MetN (362 aa).

Residues 2-241 (IHIENLSKTY…PRHEVTRAMV (240 aa)) enclose the ABC transporter domain. 38 to 45 (GPSGAGKS) lines the ATP pocket.

Belongs to the ABC transporter superfamily. Methionine importer (TC 3.A.1.24) family. As to quaternary structure, the complex is composed of two ATP-binding proteins (MetN), two transmembrane proteins (MetI) and a solute-binding protein (MetQ).

It localises to the cell inner membrane. The enzyme catalyses L-methionine(out) + ATP + H2O = L-methionine(in) + ADP + phosphate + H(+). It carries out the reaction D-methionine(out) + ATP + H2O = D-methionine(in) + ADP + phosphate + H(+). In terms of biological role, part of the ABC transporter complex MetNIQ involved in methionine import. Responsible for energy coupling to the transport system. The sequence is that of Methionine import ATP-binding protein MetN from Bordetella bronchiseptica (strain ATCC BAA-588 / NCTC 13252 / RB50) (Alcaligenes bronchisepticus).